We begin with the raw amino-acid sequence, 275 residues long: 4-hydroxy-3-methylbut-2-enyl diphosphate reductase (275 aa).

Residue C12 participates in [4Fe-4S] cluster binding. Residues H36 and H70 each coordinate (2E)-4-hydroxy-3-methylbut-2-enyl diphosphate. Dimethylallyl diphosphate is bound by residues H36 and H70. H36 and H70 together coordinate isopentenyl diphosphate. C92 lines the [4Fe-4S] cluster pocket. H120 is a binding site for (2E)-4-hydroxy-3-methylbut-2-enyl diphosphate. H120 is a binding site for dimethylallyl diphosphate. Residue H120 coordinates isopentenyl diphosphate. E122 serves as the catalytic Proton donor. Position 158 (T158) interacts with (2E)-4-hydroxy-3-methylbut-2-enyl diphosphate. [4Fe-4S] cluster is bound at residue C186. 4 residues coordinate (2E)-4-hydroxy-3-methylbut-2-enyl diphosphate: S214, S215, N216, and S258. Dimethylallyl diphosphate-binding residues include S214, S215, N216, and S258. S214, S215, N216, and S258 together coordinate isopentenyl diphosphate.

Belongs to the IspH family. [4Fe-4S] cluster serves as cofactor.

The catalysed reaction is isopentenyl diphosphate + 2 oxidized [2Fe-2S]-[ferredoxin] + H2O = (2E)-4-hydroxy-3-methylbut-2-enyl diphosphate + 2 reduced [2Fe-2S]-[ferredoxin] + 2 H(+). The enzyme catalyses dimethylallyl diphosphate + 2 oxidized [2Fe-2S]-[ferredoxin] + H2O = (2E)-4-hydroxy-3-methylbut-2-enyl diphosphate + 2 reduced [2Fe-2S]-[ferredoxin] + 2 H(+). The protein operates within isoprenoid biosynthesis; dimethylallyl diphosphate biosynthesis; dimethylallyl diphosphate from (2E)-4-hydroxy-3-methylbutenyl diphosphate: step 1/1. Its pathway is isoprenoid biosynthesis; isopentenyl diphosphate biosynthesis via DXP pathway; isopentenyl diphosphate from 1-deoxy-D-xylulose 5-phosphate: step 6/6. Catalyzes the conversion of 1-hydroxy-2-methyl-2-(E)-butenyl 4-diphosphate (HMBPP) into a mixture of isopentenyl diphosphate (IPP) and dimethylallyl diphosphate (DMAPP). Acts in the terminal step of the DOXP/MEP pathway for isoprenoid precursor biosynthesis. This chain is 4-hydroxy-3-methylbut-2-enyl diphosphate reductase, found in Campylobacter hominis (strain ATCC BAA-381 / DSM 21671 / CCUG 45161 / LMG 19568 / NCTC 13146 / CH001A).